The following is a 153-amino-acid chain: Aspartate carbamoyltransferase regulatory chain (153 aa).

4 residues coordinate Zn(2+): Cys-109, Cys-114, Cys-138, and Cys-141.

This sequence belongs to the PyrI family. Contains catalytic and regulatory chains. It depends on Zn(2+) as a cofactor.

Functionally, involved in allosteric regulation of aspartate carbamoyltransferase. The sequence is that of Aspartate carbamoyltransferase regulatory chain from Cenarchaeum symbiosum (strain A).